We begin with the raw amino-acid sequence, 106 residues long: Pyrimidine/purine nucleoside phosphorylase (106 aa).

This sequence belongs to the nucleoside phosphorylase PpnP family.

It catalyses the reaction a purine D-ribonucleoside + phosphate = a purine nucleobase + alpha-D-ribose 1-phosphate. The catalysed reaction is adenosine + phosphate = alpha-D-ribose 1-phosphate + adenine. It carries out the reaction cytidine + phosphate = cytosine + alpha-D-ribose 1-phosphate. The enzyme catalyses guanosine + phosphate = alpha-D-ribose 1-phosphate + guanine. It catalyses the reaction inosine + phosphate = alpha-D-ribose 1-phosphate + hypoxanthine. The catalysed reaction is thymidine + phosphate = 2-deoxy-alpha-D-ribose 1-phosphate + thymine. It carries out the reaction uridine + phosphate = alpha-D-ribose 1-phosphate + uracil. The enzyme catalyses xanthosine + phosphate = alpha-D-ribose 1-phosphate + xanthine. Catalyzes the phosphorolysis of diverse nucleosides, yielding D-ribose 1-phosphate and the respective free bases. Can use uridine, adenosine, guanosine, cytidine, thymidine, inosine and xanthosine as substrates. Also catalyzes the reverse reactions. This is Pyrimidine/purine nucleoside phosphorylase from Burkholderia multivorans (strain ATCC 17616 / 249).